The following is a 72-amino-acid chain: Neuropeptide SIFamide (72 aa).

A signal peptide spans 1-26 (MALRFTLTLLLVTILVAAILLGSSEA). Residue Asn-34 is glycosylated (N-linked (GlcNAc...) asparagine). Phe-38 is modified (phenylalanine amide). Positions 42–72 (NSLDYDSAKMSAVCEVAMEACPMWFPQNDSK) are excised as a propeptide.

It belongs to the FARP (FMRFamide related peptide) family. Strongly expressed in two pairs of neurons in the pars intercerebralis (at protein level).

Its subcellular location is the secreted. Ligand for the neuropeptide SIFamide receptor. Modulates sexual behavior by negatively regulating female receptivity to male courtship and by playing a role in male sex discrimination. Also involved in promoting sleep. This Drosophila melanogaster (Fruit fly) protein is Neuropeptide SIFamide.